Here is a 328-residue protein sequence, read N- to C-terminus: D-cysteine desulfhydrase (328 aa).

The residue at position 51 (K51) is an N6-(pyridoxal phosphate)lysine.

The protein belongs to the ACC deaminase/D-cysteine desulfhydrase family. Homodimer. Pyridoxal 5'-phosphate is required as a cofactor.

The catalysed reaction is D-cysteine + H2O = hydrogen sulfide + pyruvate + NH4(+) + H(+). Functionally, catalyzes the alpha,beta-elimination reaction of D-cysteine and of several D-cysteine derivatives. It could be a defense mechanism against D-cysteine. The sequence is that of D-cysteine desulfhydrase from Salmonella typhi.